Reading from the N-terminus, the 178-residue chain is MKSELTVPLARLVPWQTPAQCEPPEALLPWLLEADSMTRRLRRHNRHFSVQLFGNRSVALDADEQQLVVAEQPMGLCREVILHGDHGPAVLGWTLFAEAALQESGLRELGEQPLGERIFGDEPARRDHLQLACFEIASNPWCPAGTVWGRRSRLFLGQWPLLVHELFLPSLSCNKELE.

Substrate contacts are provided by M37, R78, L114, and E165.

This sequence belongs to the UbiC family.

It is found in the cytoplasm. It carries out the reaction chorismate = 4-hydroxybenzoate + pyruvate. It participates in cofactor biosynthesis; ubiquinone biosynthesis. Removes the pyruvyl group from chorismate, with concomitant aromatization of the ring, to provide 4-hydroxybenzoate (4HB) for the ubiquinone pathway. The chain is Probable chorismate pyruvate-lyase from Aeromonas hydrophila subsp. hydrophila (strain ATCC 7966 / DSM 30187 / BCRC 13018 / CCUG 14551 / JCM 1027 / KCTC 2358 / NCIMB 9240 / NCTC 8049).